Here is a 362-residue protein sequence, read N- to C-terminus: E3 ubiquitin-protein ligase TM129 (362 aa).

Residues 1 to 6 are Lumenal-facing; that stretch reads MDSPEV. A helical transmembrane segment spans residues 7–27; that stretch reads TFTLAYLVFAVCFVFTPNEFY. At 28–56 the chain is on the cytoplasmic side; it reads SAGLTVQNLLSGWLGSEDAAFVPYHLRRT. The helical transmembrane segment at 57-77 threads the bilayer; the sequence is SATLLCHSLLPLGYYMGMCFA. The Lumenal segment spans residues 78–94; sequence ASEKQLYSPGQAPEAWQ. The chain crosses the membrane as a helical span at residues 95–115; sequence LFLLLAVTLPLLSCTLIYYWS. Residues 116–362 are Cytoplasmic-facing; that stretch reads WDRWTRHPLA…FCILDVCCVR (247 aa). The segment at 285–350 adopts an RING-type; degenerate zinc-finger fold; the sequence is CIGCMQTRAS…ASRVPCPTCR (66 aa).

Belongs to the TMEM129 family. Integral component of ER-resident dislocation complexes.

Its subcellular location is the endoplasmic reticulum membrane. The enzyme catalyses S-ubiquitinyl-[E2 ubiquitin-conjugating enzyme]-L-cysteine + [acceptor protein]-L-lysine = [E2 ubiquitin-conjugating enzyme]-L-cysteine + N(6)-ubiquitinyl-[acceptor protein]-L-lysine.. It participates in protein modification; protein ubiquitination. Functionally, E3 ubiquitin-protein ligase involved in ER-associated protein degradation, preferentially associates with the E2 enzyme UBE2J2. Exploited by viral US11 proteins to mediate HLA class I proteins degradation. The protein is E3 ubiquitin-protein ligase TM129 (Tmem129) of Mus musculus (Mouse).